The following is a 125-amino-acid chain: Holo-[acyl-carrier-protein] synthase (125 aa).

Residues aspartate 8 and glutamate 57 each contribute to the Mg(2+) site.

This sequence belongs to the P-Pant transferase superfamily. AcpS family. Requires Mg(2+) as cofactor.

It is found in the cytoplasm. The enzyme catalyses apo-[ACP] + CoA = holo-[ACP] + adenosine 3',5'-bisphosphate + H(+). Functionally, transfers the 4'-phosphopantetheine moiety from coenzyme A to a Ser of acyl-carrier-protein. The protein is Holo-[acyl-carrier-protein] synthase of Blochmanniella floridana.